The sequence spans 143 residues: Nucleoside diphosphate kinase (143 aa).

K11, F59, R87, T93, R104, and N114 together coordinate ATP. H117 acts as the Pros-phosphohistidine intermediate in catalysis.

Belongs to the NDK family. In terms of assembly, homotetramer. It depends on Mg(2+) as a cofactor.

It localises to the cytoplasm. It catalyses the reaction a 2'-deoxyribonucleoside 5'-diphosphate + ATP = a 2'-deoxyribonucleoside 5'-triphosphate + ADP. The catalysed reaction is a ribonucleoside 5'-diphosphate + ATP = a ribonucleoside 5'-triphosphate + ADP. In terms of biological role, major role in the synthesis of nucleoside triphosphates other than ATP. The ATP gamma phosphate is transferred to the NDP beta phosphate via a ping-pong mechanism, using a phosphorylated active-site intermediate. The chain is Nucleoside diphosphate kinase from Cronobacter sakazakii (strain ATCC BAA-894) (Enterobacter sakazakii).